We begin with the raw amino-acid sequence, 135 residues long: L-ectoine synthase (135 aa).

It belongs to the ectoine synthase family.

The enzyme catalyses (2S)-4-acetamido-2-aminobutanoate = L-ectoine + H2O. Its pathway is amine and polyamine biosynthesis; ectoine biosynthesis; L-ectoine from L-aspartate 4-semialdehyde: step 3/3. In terms of biological role, catalyzes the circularization of gamma-N-acetyl-alpha,gamma-diaminobutyric acid (ADABA) to ectoine (1,4,5,6-tetrahydro-2-methyl-4-pyrimidine carboxylic acid), which is an excellent osmoprotectant. This Hyphomonas neptunium (strain ATCC 15444) protein is L-ectoine synthase.